The primary structure comprises 307 residues: Ornithine carbamoyltransferase (307 aa).

Carbamoyl phosphate is bound by residues 55–58, Gln-82, Arg-106, and 133–136; these read STRT and HPCQ. Residues Asn-164, Asp-224, and 228–229 each bind L-ornithine; that span reads SM. Carbamoyl phosphate is bound by residues 263 to 264 and Arg-291; that span reads CL.

It belongs to the aspartate/ornithine carbamoyltransferase superfamily. OTCase family.

The protein resides in the cytoplasm. The catalysed reaction is carbamoyl phosphate + L-ornithine = L-citrulline + phosphate + H(+). It participates in amino-acid biosynthesis; L-arginine biosynthesis; L-arginine from L-ornithine and carbamoyl phosphate: step 1/3. Reversibly catalyzes the transfer of the carbamoyl group from carbamoyl phosphate (CP) to the N(epsilon) atom of ornithine (ORN) to produce L-citrulline. This Bradyrhizobium diazoefficiens (strain JCM 10833 / BCRC 13528 / IAM 13628 / NBRC 14792 / USDA 110) protein is Ornithine carbamoyltransferase.